We begin with the raw amino-acid sequence, 341 residues long: Alpha-ketoglutarate-dependent dioxygenase oryG (341 aa).

Substrate is bound at residue H100. Fe cation contacts are provided by H140 and D142. 2-oxoglutarate is bound at residue T167. Fe cation is bound at residue H299. R311 and R315 together coordinate 2-oxoglutarate. A substrate-binding site is contributed by R315.

Belongs to the TfdA dioxygenase family. Requires Fe(2+) as cofactor.

It participates in secondary metabolite biosynthesis. Alpha-ketoglutarate-dependent dioxygenase; part of the gene cluster that mediates the biosynthesis of oryzines, natural products with an unusual maleidride backbone. The two subunits of the fungal fatty acid synthase oryfasA and oryfasB probably form octenoic acid. This fatty acid is most likely activated by the acyl-CoA ligase oryP to give octenyl-CoA before the citrate synthase-like protein oryE catalyzes condensation with oxaloacetate to form tricarboxylic acid. The next steps of the pathways are conjectural, but a favorite possible route has been proposed, beginning with decarboxylation and concomitant dehydration by the decarboxylase oryM, followed by tautomerization, which may lead to the production of a diene intermediate. Reduction of this diene intermediate could give the known metabolite piliformic acid. On the pathway to oryzine B and oryzine A, however, hydroxylation of the diene by the alpha-ketoglutarate-dependent dioxygenase oryG and lactonisation by the lactonohydrolases oryH or oryL could give oryzine B directly. Finally, enoyl reduction by the dehydrogenase oryD would then convert oryzine B into oryzine A. This Aspergillus oryzae (strain ATCC 42149 / RIB 40) (Yellow koji mold) protein is Alpha-ketoglutarate-dependent dioxygenase oryG.